The primary structure comprises 255 residues: Type III pantothenate kinase (255 aa).

6-13 is a binding site for ATP; sequence DVGNTNIV. Substrate-binding positions include Tyr-100 and 107-110; that span reads GADR. The active-site Proton acceptor is Asp-109. Asp-129 lines the K(+) pocket. Thr-132 serves as a coordination point for ATP. Residue Thr-184 participates in substrate binding.

It belongs to the type III pantothenate kinase family. Homodimer. Requires NH4(+) as cofactor. K(+) is required as a cofactor.

The protein resides in the cytoplasm. The enzyme catalyses (R)-pantothenate + ATP = (R)-4'-phosphopantothenate + ADP + H(+). Its pathway is cofactor biosynthesis; coenzyme A biosynthesis; CoA from (R)-pantothenate: step 1/5. Its function is as follows. Catalyzes the phosphorylation of pantothenate (Pan), the first step in CoA biosynthesis. In Thermoanaerobacter sp. (strain X514), this protein is Type III pantothenate kinase.